Reading from the N-terminus, the 311-residue chain is tRNA-cytidine(32) 2-sulfurtransferase (311 aa).

The PP-loop motif signature appears at 47–52; sequence SGGKDS. Positions 122, 125, and 213 each coordinate [4Fe-4S] cluster.

Belongs to the TtcA family. In terms of assembly, homodimer. The cofactor is Mg(2+). It depends on [4Fe-4S] cluster as a cofactor.

The protein localises to the cytoplasm. It carries out the reaction cytidine(32) in tRNA + S-sulfanyl-L-cysteinyl-[cysteine desulfurase] + AH2 + ATP = 2-thiocytidine(32) in tRNA + L-cysteinyl-[cysteine desulfurase] + A + AMP + diphosphate + H(+). It participates in tRNA modification. Its function is as follows. Catalyzes the ATP-dependent 2-thiolation of cytidine in position 32 of tRNA, to form 2-thiocytidine (s(2)C32). The sulfur atoms are provided by the cysteine/cysteine desulfurase (IscS) system. In Escherichia fergusonii (strain ATCC 35469 / DSM 13698 / CCUG 18766 / IAM 14443 / JCM 21226 / LMG 7866 / NBRC 102419 / NCTC 12128 / CDC 0568-73), this protein is tRNA-cytidine(32) 2-sulfurtransferase.